The primary structure comprises 113 residues: Large ribosomal subunit protein P2B (113 aa).

The tract at residues 66-113 (PSGGGAIDMGAPAAVAGGGAAPAEEAKKEEKVEEKEESDEDMGFSLFD) is disordered. Basic and acidic residues predominate over residues 89 to 99 (EEAKKEEKVEE).

Belongs to the eukaryotic ribosomal protein P1/P2 family. P1 and P2 exist as dimers at the large ribosomal subunit. In terms of processing, phosphorylated.

Plays an important role in the elongation step of protein synthesis. This chain is Large ribosomal subunit protein P2B (RPP2B), found in Zea mays (Maize).